Here is a 183-residue protein sequence, read N- to C-terminus: Capsid protein (183 aa).

A disordered region spans residues 143 to 183 (LPETTVIRRRGRSPRRRTPSPRRRRSQSPRRRRSQSREPQC). Basic residues predominate over residues 149–176 (IRRRGRSPRRRTPSPRRRRSQSPRRRRS). Phosphoserine; by host occurs at positions 155, 162, and 170. One copy of the 1; half-length repeat lies at 155 to 161 (SPRRRTP). Residues 155-177 (SPRRRTPSPRRRRSQSPRRRRSQ) form a 3 X 8 AA repeats of S-P-R-R-R-[PR]-S-Q region. The short motif at 158 to 175 (RRTPSPRRRRSQSPRRRR) is the Bipartite nuclear localization signal element. 2 consecutive repeat copies span residues 162–169 (SPRRRRSQ) and 170–177 (SPRRRRSQ). Positions 177–183 (QSREPQC) are RNA binding.

This sequence belongs to the orthohepadnavirus core antigen family. In terms of assembly, homodimerizes, then multimerizes. Interacts with cytosol exposed regions of viral L glycoprotein present in the reticulum-to-Golgi compartment. Interacts with human FLNB. Phosphorylated form interacts with host importin alpha; this interaction depends on the exposure of the NLS, which itself depends upon genome maturation and/or phosphorylation of the capsid protein. Interacts with host NUP153. Post-translationally, phosphorylated by host SRPK1, SRPK2, and maybe protein kinase C or GAPDH. Phosphorylation is critical for pregenomic RNA packaging. Protein kinase C phosphorylation is stimulated by HBx protein and may play a role in transport of the viral genome to the nucleus at the late step during the viral replication cycle.

It localises to the virion. Its subcellular location is the host cytoplasm. In terms of biological role, self assembles to form an icosahedral capsid. Most capsids appear to be large particles with an icosahedral symmetry of T=4 and consist of 240 copies of capsid protein, though a fraction forms smaller T=3 particles consisting of 180 capsid proteins. Entering capsids are transported along microtubules to the nucleus. Phosphorylation of the capsid is thought to induce exposure of nuclear localization signal in the C-terminal portion of the capsid protein that allows binding to the nuclear pore complex via the importin (karyopherin-) alpha and beta. Capsids are imported in intact form through the nuclear pore into the nuclear basket, where it probably binds NUP153. Only capsids that contain the mature viral genome can release the viral DNA and capsid protein into the nucleoplasm. Immature capsids get stuck in the basket. Capsids encapsulate the pre-genomic RNA and the P protein. Pre-genomic RNA is reverse-transcribed into DNA while the capsid is still in the cytoplasm. The capsid can then either be directed to the nucleus, providing more genomes for transcription, or bud through the endoplasmic reticulum to provide new virions. In Hepatitis B virus genotype B1 (isolate Japan/Ry30/2002) (HBV-B), this protein is Capsid protein.